The primary structure comprises 67 residues: Large ribosomal subunit protein uL29c (67 aa).

The protein belongs to the universal ribosomal protein uL29 family.

It localises to the plastid. Its subcellular location is the chloroplast. The sequence is that of Large ribosomal subunit protein uL29c (rpl29) from Porphyra purpurea (Red seaweed).